Here is a 550-residue protein sequence, read N- to C-terminus: Chaperonin GroEL (550 aa).

Residues 30–33 (TLGP), K51, 87–91 (DGTTT), G415, and D495 each bind ATP.

It belongs to the chaperonin (HSP60) family. In terms of assembly, forms a cylinder of 14 subunits composed of two heptameric rings stacked back-to-back. Interacts with the co-chaperonin GroES.

The protein resides in the cytoplasm. It carries out the reaction ATP + H2O + a folded polypeptide = ADP + phosphate + an unfolded polypeptide.. Functionally, together with its co-chaperonin GroES, plays an essential role in assisting protein folding. The GroEL-GroES system forms a nano-cage that allows encapsulation of the non-native substrate proteins and provides a physical environment optimized to promote and accelerate protein folding. The sequence is that of Chaperonin GroEL from Dechloromonas aromatica (strain RCB).